The sequence spans 61 residues: Large ribosomal subunit protein bL32 (61 aa).

Residues 1–16 (MAVPKRKTSPSKRGMR) are compositionally biased toward basic residues. The segment at 1–40 (MAVPKRKTSPSKRGMRRSADALKAPTYIEDKNSGELRRPH) is disordered. The span at 28–40 (IEDKNSGELRRPH) shows a compositional bias: basic and acidic residues.

This sequence belongs to the bacterial ribosomal protein bL32 family.

The chain is Large ribosomal subunit protein bL32 from Sinorhizobium medicae (strain WSM419) (Ensifer medicae).